Here is a 559-residue protein sequence, read N- to C-terminus: CTP synthase (559 aa).

The segment at 1–283 (MSTSRTTTNN…DTFLIRRLDL (283 aa)) is amidoligase domain. Serine 25 serves as a coordination point for CTP. Serine 25 contacts UTP. ATP contacts are provided by residues 26–31 (SLGKGL) and aspartate 83. The Mg(2+) site is built by aspartate 83 and glutamate 157. Residues 164 to 166 (DIE), 204 to 209 (KTKPTQ), and lysine 240 contribute to the CTP site. UTP is bound by residues 204 to 209 (KTKPTQ) and lysine 240. Residues 308–557 (TVGIVGKYVD…VAAALAAAVT (250 aa)) enclose the Glutamine amidotransferase type-1 domain. Position 371 (glycine 371) interacts with L-glutamine. Residue cysteine 398 is the Nucleophile; for glutamine hydrolysis of the active site. Residues 399-402 (LGLQ), glutamate 421, and arginine 482 contribute to the L-glutamine site. Residues histidine 530 and glutamate 532 contribute to the active site.

The protein belongs to the CTP synthase family. As to quaternary structure, homotetramer.

The enzyme catalyses UTP + L-glutamine + ATP + H2O = CTP + L-glutamate + ADP + phosphate + 2 H(+). It carries out the reaction L-glutamine + H2O = L-glutamate + NH4(+). It catalyses the reaction UTP + NH4(+) + ATP = CTP + ADP + phosphate + 2 H(+). It functions in the pathway pyrimidine metabolism; CTP biosynthesis via de novo pathway; CTP from UDP: step 2/2. Its activity is regulated as follows. Allosterically activated by GTP, when glutamine is the substrate; GTP has no effect on the reaction when ammonia is the substrate. The allosteric effector GTP functions by stabilizing the protein conformation that binds the tetrahedral intermediate(s) formed during glutamine hydrolysis. Inhibited by the product CTP, via allosteric rather than competitive inhibition. Catalyzes the ATP-dependent amination of UTP to CTP with either L-glutamine or ammonia as the source of nitrogen. Regulates intracellular CTP levels through interactions with the four ribonucleotide triphosphates. The protein is CTP synthase of Corynebacterium efficiens (strain DSM 44549 / YS-314 / AJ 12310 / JCM 11189 / NBRC 100395).